Consider the following 180-residue polypeptide: NADH-quinone oxidoreductase subunit I (180 aa).

4Fe-4S ferredoxin-type domains follow at residues I48 to A80 and E90 to D119. [4Fe-4S] cluster-binding residues include C60, C63, C66, C70, C99, C102, C105, and C109. A disordered region spans residues G160–P180.

It belongs to the complex I 23 kDa subunit family. NDH-1 is composed of 14 different subunits. Subunits NuoA, H, J, K, L, M, N constitute the membrane sector of the complex. The cofactor is [4Fe-4S] cluster.

The protein localises to the cell inner membrane. It catalyses the reaction a quinone + NADH + 5 H(+)(in) = a quinol + NAD(+) + 4 H(+)(out). In terms of biological role, NDH-1 shuttles electrons from NADH, via FMN and iron-sulfur (Fe-S) centers, to quinones in the respiratory chain. The immediate electron acceptor for the enzyme in this species is believed to be ubiquinone. Couples the redox reaction to proton translocation (for every two electrons transferred, four hydrogen ions are translocated across the cytoplasmic membrane), and thus conserves the redox energy in a proton gradient. The chain is NADH-quinone oxidoreductase subunit I from Tolumonas auensis (strain DSM 9187 / NBRC 110442 / TA 4).